The sequence spans 126 residues: UPF0538 protein C2orf76 homolog (126 aa).

This sequence belongs to the UPF0538 family.

The polypeptide is UPF0538 protein C2orf76 homolog (Pongo abelii (Sumatran orangutan)).